The following is an 87-amino-acid chain: uncharacterized protein (87 aa).

Residues 1-22 form the signal peptide; the sequence is MKIKTTVAALSVLSVLSFGAFA.

It belongs to the BhsA/McbA family.

It localises to the periplasm. This is an uncharacterized protein from Escherichia coli O6:H1 (strain CFT073 / ATCC 700928 / UPEC).